Reading from the N-terminus, the 594-residue chain is UvrABC system protein C (594 aa).

Residues asparagine 13–isoleucine 99 form the GIY-YIG domain. One can recognise a UVR domain in the interval aspartate 205–isoleucine 240.

The protein belongs to the UvrC family. Interacts with UvrB in an incision complex.

The protein resides in the cytoplasm. The UvrABC repair system catalyzes the recognition and processing of DNA lesions. UvrC both incises the 5' and 3' sides of the lesion. The N-terminal half is responsible for the 3' incision and the C-terminal half is responsible for the 5' incision. In Helicobacter pylori (strain G27), this protein is UvrABC system protein C.